Consider the following 673-residue polypeptide: eEF1A lysine and N-terminal methyltransferase homolog (673 aa).

Belongs to the methyltransferase superfamily.

The enzyme catalyses L-lysyl-[protein] + S-adenosyl-L-methionine = N(6)-methyl-L-lysyl-[protein] + S-adenosyl-L-homocysteine + H(+). It catalyses the reaction N(6)-methyl-L-lysyl-[protein] + S-adenosyl-L-methionine = N(6),N(6)-dimethyl-L-lysyl-[protein] + S-adenosyl-L-homocysteine + H(+). It carries out the reaction N-terminal glycyl-L-lysyl-L-glutamyl-[protein] + 3 S-adenosyl-L-methionine = N-terminal N,N,N-trimethyl-glycyl-L-lysyl-L-glutamyl-[protein] + 3 S-adenosyl-L-homocysteine + 3 H(+). Dual methyltransferase. It catalyzes N-terminal methylation of target proteins via its C-terminus. It catalyzes dimethylation on lysine residues of target proteins via its N-terminus. The polypeptide is eEF1A lysine and N-terminal methyltransferase homolog (Drosophila melanogaster (Fruit fly)).